Consider the following 227-residue polypeptide: Ashwin (227 aa).

Residues 71-84 show a composition bias toward basic and acidic residues; the sequence is LPRSRWGKRMEKSR. Residues 71-227 form a disordered region; sequence LPRSRWGKRM…KKKIQHITWP (157 aa). Residues 88-98 show a composition bias toward low complexity; it reads SSSSTHSSSTD. Polar residues predominate over residues 153-173; the sequence is GASTNCSSSNFSNRTPVSSSG. The span at 178–191 shows a compositional bias: low complexity; that stretch reads SPSNHSNSSVHSNN. Basic and acidic residues predominate over residues 204-219; the sequence is GEPDTAKDIKSPETKK.

The protein belongs to the ashwin family.

The protein localises to the nucleus. The chain is Ashwin from Danio rerio (Zebrafish).